The following is a 262-amino-acid chain: uncharacterized protein (262 aa).

A run of 6 helical transmembrane segments spans residues 21-41 (ILIT…VGKF), 94-114 (IVSN…LAYL), 139-159 (LLIL…GVNL), 164-184 (LIAV…AVVV), 205-225 (IVIL…LEPI), and 240-260 (LLAA…SMLF).

The protein resides in the cell membrane. This is an uncharacterized protein from Methanocaldococcus jannaschii (strain ATCC 43067 / DSM 2661 / JAL-1 / JCM 10045 / NBRC 100440) (Methanococcus jannaschii).